The following is a 330-amino-acid chain: Src kinase-associated phosphoprotein 2-B (330 aa).

A disordered region spans residues 57–84; that stretch reads DKAEDDDQEENDGFPLPPDAVSLASDRD. Acidic residues predominate over residues 59-68; it reads AEDDDQEEND. The 104-residue stretch at 105 to 208 folds into the PH domain; that stretch reads EYLKAGYLEK…WINAIMNSRG (104 aa). The interval 236 to 261 is disordered; the sequence is ELPEESEKPVTETETQKATPVPVNNT. Positions 240–250 are enriched in basic and acidic residues; the sequence is ESEKPVTETET. Positions 251 to 261 are enriched in polar residues; that stretch reads QKATPVPVNNT. The 62-residue stretch at 268 to 329 folds into the SH3 domain; that stretch reads DYANFYRGLW…PKAYIIEMYD (62 aa).

It belongs to the SKAP family. In terms of processing, phosphorylated on tyrosines.

It is found in the cytoplasm. Its function is as follows. May be involved in B-cell and macrophage adhesion processes. May play a role in src signaling pathway. The protein is Src kinase-associated phosphoprotein 2-B (skap2-b) of Xenopus laevis (African clawed frog).